A 180-amino-acid chain; its full sequence is Large ribosomal subunit protein uL5 (180 aa).

It belongs to the universal ribosomal protein uL5 family. In terms of assembly, part of the 50S ribosomal subunit; part of the 5S rRNA/L5/L18/L25 subcomplex. Contacts the 5S rRNA and the P site tRNA. Forms a bridge to the 30S subunit in the 70S ribosome.

In terms of biological role, this is one of the proteins that bind and probably mediate the attachment of the 5S RNA into the large ribosomal subunit, where it forms part of the central protuberance. In the 70S ribosome it contacts protein S13 of the 30S subunit (bridge B1b), connecting the 2 subunits; this bridge is implicated in subunit movement. Contacts the P site tRNA; the 5S rRNA and some of its associated proteins might help stabilize positioning of ribosome-bound tRNAs. The polypeptide is Large ribosomal subunit protein uL5 (Heliobacterium modesticaldum (strain ATCC 51547 / Ice1)).